The primary structure comprises 334 residues: N-acetyl-gamma-glutamyl-phosphate reductase (334 aa).

Cys-154 is a catalytic residue.

The protein belongs to the NAGSA dehydrogenase family. Type 1 subfamily.

Its subcellular location is the cytoplasm. It carries out the reaction N-acetyl-L-glutamate 5-semialdehyde + phosphate + NADP(+) = N-acetyl-L-glutamyl 5-phosphate + NADPH + H(+). The protein operates within amino-acid biosynthesis; L-arginine biosynthesis; N(2)-acetyl-L-ornithine from L-glutamate: step 3/4. In terms of biological role, catalyzes the NADPH-dependent reduction of N-acetyl-5-glutamyl phosphate to yield N-acetyl-L-glutamate 5-semialdehyde. The polypeptide is N-acetyl-gamma-glutamyl-phosphate reductase (Photorhabdus laumondii subsp. laumondii (strain DSM 15139 / CIP 105565 / TT01) (Photorhabdus luminescens subsp. laumondii)).